The following is a 432-amino-acid chain: UDP-N-acetylglucosamine 1-carboxyvinyltransferase (432 aa).

22 to 23 is a binding site for phosphoenolpyruvate; that stretch reads KN. R92 is a binding site for UDP-N-acetyl-alpha-D-glucosamine. C116 functions as the Proton donor in the catalytic mechanism. Position 116 is a 2-(S-cysteinyl)pyruvic acid O-phosphothioketal (C116). UDP-N-acetyl-alpha-D-glucosamine is bound by residues 121–125, D307, and I329; that span reads RPVDQ.

This sequence belongs to the EPSP synthase family. MurA subfamily.

It is found in the cytoplasm. It carries out the reaction phosphoenolpyruvate + UDP-N-acetyl-alpha-D-glucosamine = UDP-N-acetyl-3-O-(1-carboxyvinyl)-alpha-D-glucosamine + phosphate. It functions in the pathway cell wall biogenesis; peptidoglycan biosynthesis. Cell wall formation. Adds enolpyruvyl to UDP-N-acetylglucosamine. The protein is UDP-N-acetylglucosamine 1-carboxyvinyltransferase of Psychrobacter sp. (strain PRwf-1).